The primary structure comprises 214 residues: Ependymin (214 aa).

The N-terminal stretch at 1–20 is a signal peptide; it reads MHTVKLLCVVFSCLCAVAWA. N-linked (GlcNAc...) asparagine glycans are attached at residues Asn-70 and Asn-93.

This sequence belongs to the ependymin family. As to quaternary structure, forms disulfide-linked dimers. Post-translationally, binds calcium through the terminal sialic acids.

The protein resides in the secreted. Its function is as follows. May play a role in neural plasticity. May be involved during axon regeneration. The polypeptide is Ependymin (epd) (Notemigonus crysoleucas (Golden shiner)).